The chain runs to 388 residues: Succinate--CoA ligase [ADP-forming] subunit beta (388 aa).

The 236-residue stretch at 9 to 244 (KEIFRSMGVA…LEEEDPKEIE (236 aa)) folds into the ATP-grasp domain. ATP-binding positions include K46, 53–55 (GRG), E99, C102, and E107. Mg(2+)-binding residues include N199 and D213. Residues N264 and 321–323 (GIM) contribute to the substrate site.

Belongs to the succinate/malate CoA ligase beta subunit family. In terms of assembly, heterotetramer of two alpha and two beta subunits. The cofactor is Mg(2+).

The catalysed reaction is succinate + ATP + CoA = succinyl-CoA + ADP + phosphate. It catalyses the reaction GTP + succinate + CoA = succinyl-CoA + GDP + phosphate. It functions in the pathway carbohydrate metabolism; tricarboxylic acid cycle; succinate from succinyl-CoA (ligase route): step 1/1. In terms of biological role, succinyl-CoA synthetase functions in the citric acid cycle (TCA), coupling the hydrolysis of succinyl-CoA to the synthesis of either ATP or GTP and thus represents the only step of substrate-level phosphorylation in the TCA. The beta subunit provides nucleotide specificity of the enzyme and binds the substrate succinate, while the binding sites for coenzyme A and phosphate are found in the alpha subunit. The protein is Succinate--CoA ligase [ADP-forming] subunit beta of Staphylococcus aureus (strain bovine RF122 / ET3-1).